We begin with the raw amino-acid sequence, 312 residues long: Olfactory receptor 1D2 (312 aa).

At 1 to 25 (MDGGNQSEGSEFLLLGMSESPEQQQ) the chain is on the extracellular side. N-linked (GlcNAc...) asparagine glycosylation is present at Asn5. Residues 26 to 49 (ILFWMFLSMYLVTVVGNVLIILAI) form a helical membrane-spanning segment. Residues 50–57 (NSDSHLHT) are Cytoplasmic-facing. A helical membrane pass occupies residues 58 to 79 (PMYFFLANLSFTDLFFVTNTIP). Residues 80–100 (KMLVNLQSQNKAISYAGCLTQ) are Extracellular-facing. The cysteines at positions 97 and 189 are disulfide-linked. A helical transmembrane segment spans residues 101–120 (LYFLVSLVALDNLILAVMAY). Over 121–139 (DRYVAICCPLHYTTAMSPK) the chain is Cytoplasmic. A helical transmembrane segment spans residues 140–158 (LCILLLSLCWVLSVLYGLI). At 159 to 196 (HTILMTRVTFCGSRKIHYIFCEMYVLLRMACSNIQINH) the chain is on the extracellular side. N-linked (GlcNAc...) asparagine glycosylation occurs at Asn195. A helical transmembrane segment spans residues 197–219 (TVLIATGCFIFLIPFGFVIISYV). The Cytoplasmic portion of the chain corresponds to 220–236 (LIIRAILRIPSVSKKYK). A helical transmembrane segment spans residues 237–259 (AFSTCASHLGAVSLFYGTLCMVY). Topologically, residues 260–271 (LKPLHTFSVKDS) are extracellular. Residues 272–291 (VATVMYAVVTPMMNPFIYSL) form a helical membrane-spanning segment. At 292-312 (RNKDMHGALGRLLDTHFKRLT) the chain is on the cytoplasmic side.

The protein belongs to the G-protein coupled receptor 1 family.

The protein resides in the cell membrane. Odorant receptor. This Gorilla gorilla gorilla (Western lowland gorilla) protein is Olfactory receptor 1D2 (OR1D2).